The chain runs to 400 residues: Lysophospholipid transporter LplT (400 aa).

The next 11 helical transmembrane spans lie at Val19–Ala39, Val53–Ala73, Ala91–Ile111, Leu139–Ala159, Ile164–Ile184, Leu227–Leu247, Tyr257–Val277, Thr281–Leu301, Ala304–Val324, Asn352–Ala372, and Val373–Trp393.

This sequence belongs to the major facilitator superfamily. LplT (TC 2.A.1.42) family.

The protein localises to the cell inner membrane. Catalyzes the facilitated diffusion of 2-acyl-glycero-3-phosphoethanolamine (2-acyl-GPE) into the cell. In Salmonella gallinarum (strain 287/91 / NCTC 13346), this protein is Lysophospholipid transporter LplT.